The primary structure comprises 98 residues: Large ribosomal subunit protein bL28 (98 aa).

It belongs to the bacterial ribosomal protein bL28 family.

The chain is Large ribosomal subunit protein bL28 from Mesorhizobium japonicum (strain LMG 29417 / CECT 9101 / MAFF 303099) (Mesorhizobium loti (strain MAFF 303099)).